The sequence spans 315 residues: Replication factor C small subunit (315 aa).

43-50 (GSPGVGKT) contacts ATP.

It belongs to the activator 1 small subunits family. RfcS subfamily. Heteromultimer composed of small subunits (RfcS) and large subunits (RfcL).

Its function is as follows. Part of the RFC clamp loader complex which loads the PCNA sliding clamp onto DNA. The protein is Replication factor C small subunit of Methanococcus maripaludis (strain C7 / ATCC BAA-1331).